The primary structure comprises 348 residues: Lysophosphatidic acid receptor 2 (348 aa).

Residues 1–30 (MGQCYYNETIGFFYNNSGKELSLHWRPKDV) lie on the Extracellular side of the membrane. N-linked (GlcNAc...) asparagine glycosylation is found at asparagine 7 and asparagine 15. The helical transmembrane segment at 31-51 (VVVALGLTVSVLVLLTNLLVI) threads the bilayer. The Cytoplasmic portion of the chain corresponds to 52 to 66 (AAIASNRRFHQPIYY). A helical transmembrane segment spans residues 67–87 (LLGNLAAADLFAGMAYLFLMF). Residues 88–104 (HTGPRTARLSIKGWFLR) are Extracellular-facing. A helical transmembrane segment spans residues 105–124 (QGLLDTSLTASVATLLAIAV). At 125–144 (ERHRSVMAVQLHSRLPRGRV) the chain is on the cytoplasmic side. The chain crosses the membrane as a helical span at residues 145 to 165 (VTLIVGVWAAALGLGLLPAHF). Residues 166–185 (WHCLCDLDSCSRMVPLFSRS) are Extracellular-facing. A helical transmembrane segment spans residues 186-206 (YLAAWALSSLLVFLLMVAVYT). Over 207–239 (RIFFYVRRRVERMAEHVSCHPRYRETTLSLVKT) the chain is Cytoplasmic. The helical transmembrane segment at 240–260 (VVIILGAFVVCWTPGQVVLLL) threads the bilayer. Residues 261-270 (DGLDCKSCNV) lie on the Extracellular side of the membrane. A helical transmembrane segment spans residues 271 to 291 (LAVEKYFLLLAEANSLVNAVV). The Cytoplasmic segment spans residues 292–348 (YSCRDAEMRRTFRRLLCCMCLRWSSHKSARYSASAQTGASTRIMLPENGRPLMDSTL). Cysteine 308 carries S-palmitoyl cysteine lipidation. A PDZ-binding motif is present at residues 345-348 (DSTL).

It belongs to the G-protein coupled receptor 1 family. Interacts with SLC9A3R2/NHERF2, MAGI3 and PLCB3. Interacts with RALA and GRK2. Most abundantly expressed in testes, kidney, and embryonic brain. Other organs also express the transcript, including heart, lung, spleen, thymus, stomach, and adult brain. Several have little or no expression, including liver, small intestine, and skeletal muscle.

It is found in the cell surface. The protein resides in the cell membrane. Its function is as follows. Receptor for lysophosphatidic acid (LPA), a mediator of diverse cellular activities. Seems to be coupled to the G(i)/G(o), G(12)/G(13), and G(q) families of heteromeric G proteins. Plays a key role in phospholipase C-beta (PLC-beta) signaling pathway Stimulates phospholipase C (PLC) activity in a manner that is independent of RALA activation. The protein is Lysophosphatidic acid receptor 2 of Mus musculus (Mouse).